The following is a 583-amino-acid chain: Proline--tRNA ligase (583 aa).

It belongs to the class-II aminoacyl-tRNA synthetase family. ProS type 1 subfamily. In terms of assembly, homodimer.

It localises to the cytoplasm. It catalyses the reaction tRNA(Pro) + L-proline + ATP = L-prolyl-tRNA(Pro) + AMP + diphosphate. Catalyzes the attachment of proline to tRNA(Pro) in a two-step reaction: proline is first activated by ATP to form Pro-AMP and then transferred to the acceptor end of tRNA(Pro). As ProRS can inadvertently accommodate and process non-cognate amino acids such as alanine and cysteine, to avoid such errors it has two additional distinct editing activities against alanine. One activity is designated as 'pretransfer' editing and involves the tRNA(Pro)-independent hydrolysis of activated Ala-AMP. The other activity is designated 'posttransfer' editing and involves deacylation of mischarged Ala-tRNA(Pro). The misacylated Cys-tRNA(Pro) is not edited by ProRS. In Methylococcus capsulatus (strain ATCC 33009 / NCIMB 11132 / Bath), this protein is Proline--tRNA ligase.